Reading from the N-terminus, the 147-residue chain is Basic phospholipase A2 beta-bungarotoxin A2 chain (147 aa).

The signal sequence occupies residues 1-19 (MYPAHLLVLSAVCVSLLGA). A propeptide spanning residues 20-27 (ANIPPYPL) is cleaved from the precursor. 6 disulfides stabilise this stretch: C54–C146, C56–C72, C71–C127, C78–C120, C88–C113, and C106–C118. Y55, G57, and G59 together coordinate Ca(2+). H75 is a catalytic residue. D76 lines the Ca(2+) pocket. D121 is an active-site residue.

This sequence belongs to the phospholipase A2 family. Group I subfamily. D49 sub-subfamily. In terms of assembly, heterodimer; disulfide-linked. The A chains have phospholipase A2 activity and the B chains show homology with the basic protease inhibitors. Ca(2+) serves as cofactor. Expressed by the venom gland.

The protein resides in the secreted. It carries out the reaction a 1,2-diacyl-sn-glycero-3-phosphocholine + H2O = a 1-acyl-sn-glycero-3-phosphocholine + a fatty acid + H(+). Snake venom phospholipase A2 (PLA2) that inhibits neuromuscular transmission by blocking acetylcholine release from the nerve termini. PLA2 catalyzes the calcium-dependent hydrolysis of the 2-acyl groups in 3-sn-phosphoglycerides. The polypeptide is Basic phospholipase A2 beta-bungarotoxin A2 chain (Bungarus caeruleus (Indian krait)).